We begin with the raw amino-acid sequence, 395 residues long: Ribosomal RNA large subunit methyltransferase G (395 aa).

Belongs to the methyltransferase superfamily. RlmG family.

It localises to the cytoplasm. The enzyme catalyses guanosine(1835) in 23S rRNA + S-adenosyl-L-methionine = N(2)-methylguanosine(1835) in 23S rRNA + S-adenosyl-L-homocysteine + H(+). Its function is as follows. Specifically methylates the guanine in position 1835 (m2G1835) of 23S rRNA. The chain is Ribosomal RNA large subunit methyltransferase G from Yersinia pseudotuberculosis serotype O:1b (strain IP 31758).